The primary structure comprises 681 residues: Glutamine--fructose-6-phosphate aminotransferase [isomerizing] 1 (681 aa).

Cysteine 2 serves as the catalytic For GATase activity. One can recognise a Glutamine amidotransferase type-2 domain in the interval 2-287 (CGIFAYLNYH…DDDVAAVVDG (286 aa)). Phosphoserine occurs at positions 103 and 243. Residues 295-662 (KRTARDHPGR…LQLLAFHLAV (368 aa)) form an isomerase region. 2 consecutive SIS domains span residues 359-498 (HIKE…DRIS) and 530-671 (LATE…VDFP). Substrate contacts are provided by residues 376-377 (TS), 421-423 (SQS), threonine 426, and histidine 577.

Homotetramer, may also exist as homodimers.

The catalysed reaction is D-fructose 6-phosphate + L-glutamine = D-glucosamine 6-phosphate + L-glutamate. The protein operates within nucleotide-sugar biosynthesis; UDP-N-acetyl-alpha-D-glucosamine biosynthesis; alpha-D-glucosamine 6-phosphate from D-fructose 6-phosphate: step 1/1. With respect to regulation, inhibited by 4,4'-dithiodipyridine. Functionally, controls the flux of glucose into the hexosamine pathway. Most likely involved in regulating the availability of precursors for N- and O-linked glycosylation of proteins. Regulates the circadian expression of clock genes BMAL1 and CRY1. Has a role in fine tuning the metabolic fluctuations of cytosolic UDP-GlcNAc and its effects on hyaluronan synthesis that occur during tissue remodeling. The polypeptide is Glutamine--fructose-6-phosphate aminotransferase [isomerizing] 1 (Gfpt1) (Rattus norvegicus (Rat)).